We begin with the raw amino-acid sequence, 126 residues long: MIEPISTNDAPGAVGPYSQAIKVGDLLFVSGQLPIDPATGEFNSANAVEQAEQCLKNLQAIARAAGTDLSKTVKTTVLLTDLGDFADINRVYTGFFSTPYPARACYEVKALPKGAKVEIEAVISLT.

Belongs to the RutC family.

In Sinorhizobium fredii (strain NBRC 101917 / NGR234), this protein is RutC family protein y4sK.